We begin with the raw amino-acid sequence, 220 residues long: Protein-L-isoaspartate O-methyltransferase (220 aa).

S65 is an active-site residue.

Belongs to the methyltransferase superfamily. L-isoaspartyl/D-aspartyl protein methyltransferase family.

The protein resides in the cytoplasm. It carries out the reaction [protein]-L-isoaspartate + S-adenosyl-L-methionine = [protein]-L-isoaspartate alpha-methyl ester + S-adenosyl-L-homocysteine. Functionally, catalyzes the methyl esterification of L-isoaspartyl residues in peptides and proteins that result from spontaneous decomposition of normal L-aspartyl and L-asparaginyl residues. It plays a role in the repair and/or degradation of damaged proteins. This is Protein-L-isoaspartate O-methyltransferase (pcm) from Pyrococcus horikoshii (strain ATCC 700860 / DSM 12428 / JCM 9974 / NBRC 100139 / OT-3).